The sequence spans 445 residues: C4-dicarboxylate transport protein (445 aa).

The next 8 helical transmembrane spans lie at 17-37 (FYQI…LLGY), 56-76 (LVKM…IAAM), 91-111 (VYFL…SHIV), 157-177 (FVGG…LSLA), 200-220 (LVAI…AFTI), 233-253 (MLVG…LGMV), 319-339 (IYMT…LSLG), and 367-387 (AATL…ILGV).

It belongs to the dicarboxylate/amino acid:cation symporter (DAACS) (TC 2.A.23) family.

Its subcellular location is the cell inner membrane. Its function is as follows. Responsible for the transport of dicarboxylates such as succinate, fumarate, and malate from the periplasm across the membrane. The chain is C4-dicarboxylate transport protein from Bordetella avium (strain 197N).